We begin with the raw amino-acid sequence, 513 residues long: MEAIISFAGIGINYKRLQSKLQHDFGRLLKALTVTARALPGQPKHIAIRQETAFTLQGEYIYFPILLRKQFEMFNMVYTARPVSLRALPCVETEFPLFNYQQEMVDKIHKKLLSPYGRFYLHLNTGLGKTRIAISIIQKLLYPTLVIVPTKAIQVQWIDELTLLLPHLRVAAYNNAACKKKDMTSKEYDVIVGIINTLRKKPEQFFEPFGLVVLDEAHELHSPENYKIFWKIQLSRILGLSATPLDRPDGMDKIIIHHLGQPQRTVSPTTTFSGYVREIEYQGHPDFVSPVCINEKVSAIATIDKLLQDPSRIQLVVNEAKRLYSLHTAEPHKWGTDEPYGIIIFVEFRKLLEIFYQALSKEFKDVQIIVPEVALLCGGVSNTALSQTHSASIILLTYGYGRRGISFKHMTSIIMATPRRNNMEQILGRITRQGSDEKKVRIVVDIKDTLSPLSSQVYDRHRIYKKKGYPIFKCSASYQQPYSSNEVLIWDPYNESCLACTTTPPSPSKQKHT.

The 153-residue stretch at 110–262 (KKLLSPYGRF…KIIIHHLGQP (153 aa)) folds into the Helicase ATP-binding domain. 123–130 (LNTGLGKT) provides a ligand contact to ATP. The DEAH box motif lies at 215-218 (DEAH).

Belongs to the DEAD box helicase family. DEAH subfamily.

The enzyme catalyses ATP + H2O = ADP + phosphate + H(+). The polypeptide is Putative ATP-dependent RNA helicase QP509L (African swine fever virus (isolate Tick/South Africa/Pretoriuskop Pr4/1996) (ASFV)).